The primary structure comprises 290 residues: DegV domain-containing protein MG450 (290 aa).

Positions 3 to 289 (IAFLVDSVSN…INSYAFLIQT (287 aa)) constitute a DegV domain. Residues threonine 65 and serine 97 each contribute to the hexadecanoate site.

In terms of biological role, may bind long-chain fatty acids, such as palmitate, and may play a role in lipid transport or fatty acid metabolism. This is DegV domain-containing protein MG450 from Mycoplasma genitalium (strain ATCC 33530 / DSM 19775 / NCTC 10195 / G37) (Mycoplasmoides genitalium).